Reading from the N-terminus, the 491-residue chain is Protein DETOXIFICATION 20 (491 aa).

Helical transmembrane passes span 37-57, 75-95, 120-140, 156-176, 185-205, 214-234, 265-285, 296-316, 337-357, 381-401, 413-433, and 438-458; these read LWVVAAPAIFTRYSTFGVSMV, ITFTILLRFSNGILLGMAGAL, IVLTGGTICLMPVFIFAGPIL, LALWVIGINFSFVPSFTCQMF, IISYVTAVSLGLHVFFSWLLV, GAMTSMLIAFWLPIIVQLLYV, GGMLCLELWYNSVLVLLTGNL, AICISINALEMMIALGFLAAV, LIAVFTSLSIGIVLFFVFLFL, LLAFSILLNSVQPVLSGVAIG, LACYYLVGIPIGVILGYVVGL, and VWIGMLFGIFVQTCVLTVMTL.

This sequence belongs to the multi antimicrobial extrusion (MATE) (TC 2.A.66.1) family.

It localises to the membrane. The protein is Protein DETOXIFICATION 20 of Arabidopsis thaliana (Mouse-ear cress).